Reading from the N-terminus, the 87-residue chain is Long neurotoxin homolog (87 aa).

The signal sequence occupies residues 1–21; sequence MKTLLLTLVVVTIVCLDLGYT. Intrachain disulfides connect cysteine 24-cysteine 47, cysteine 27-cysteine 32, cysteine 40-cysteine 64, cysteine 68-cysteine 80, and cysteine 81-cysteine 86.

As to expression, expressed by the venom gland.

The protein resides in the secreted. Functionally, inhibits carbachol-induced muscle contraction in a reversible manner. The protein is Long neurotoxin homolog of Bungarus multicinctus (Many-banded krait).